The sequence spans 288 residues: Shikimate dehydrogenase (NADP(+)) (288 aa).

Residues 21 to 23 (SLS) and threonine 68 each bind shikimate. Lysine 72 (proton acceptor) is an active-site residue. Shikimate is bound by residues asparagine 93 and aspartate 108. Residues 132 to 136 (GNGGA) and leucine 230 each bind NADP(+). Residue tyrosine 232 coordinates shikimate. Residue glycine 253 coordinates NADP(+).

Belongs to the shikimate dehydrogenase family. As to quaternary structure, homodimer.

It carries out the reaction shikimate + NADP(+) = 3-dehydroshikimate + NADPH + H(+). It participates in metabolic intermediate biosynthesis; chorismate biosynthesis; chorismate from D-erythrose 4-phosphate and phosphoenolpyruvate: step 4/7. Involved in the biosynthesis of the chorismate, which leads to the biosynthesis of aromatic amino acids. Catalyzes the reversible NADPH linked reduction of 3-dehydroshikimate (DHSA) to yield shikimate (SA). This Crocosphaera subtropica (strain ATCC 51142 / BH68) (Cyanothece sp. (strain ATCC 51142)) protein is Shikimate dehydrogenase (NADP(+)).